A 711-amino-acid polypeptide reads, in one-letter code: Putative membrane protein IgaA homolog (711 aa).

Met-1 is a topological domain (periplasmic). The chain crosses the membrane as a helical span at residues 2-22 (STIVIFLAALLACSLLAGWLI). Over 23–204 (KVRSRRRQLP…YALSRPRGLR (182 aa)) the chain is Cytoplasmic. The next 2 membrane-spanning stretches (helical) occupy residues 205–225 (EALLIVASFLMFFFCLITPDV) and 226–246 (FVPWLAGGALLLLGAGLWGLF). At 247 to 339 (APPAKSSLRE…KNFPLQHWLR (93 aa)) the chain is on the cytoplasmic side. The chain crosses the membrane as a helical span at residues 340–360 (STIIAAGSLLVLFMLLFWIPL). At 361–655 (DMPLKFTLSW…IPDRSGLWRY (295 aa)) the chain is on the periplasmic side. Residues 656–676 (LSTTLLLLTMLGSAIYNGVQA) form a helical membrane-spanning segment. At 677 to 711 (WRRYQRHRTRMMEIQAYYESCLNPQLITPSESLIE) the chain is on the cytoplasmic side.

Belongs to the IgaA family.

The protein localises to the cell inner membrane. This Escherichia coli (strain K12) protein is Putative membrane protein IgaA homolog (yrfF).